The chain runs to 92 residues: Large ribosomal subunit protein eL31 (92 aa).

Belongs to the eukaryotic ribosomal protein eL31 family.

The chain is Large ribosomal subunit protein eL31 from Halorubrum lacusprofundi (strain ATCC 49239 / DSM 5036 / JCM 8891 / ACAM 34).